We begin with the raw amino-acid sequence, 498 residues long: ATP synthase subunit beta, chloroplastic (498 aa).

An ATP-binding site is contributed by 172–179 (GGAGVGKT).

This sequence belongs to the ATPase alpha/beta chains family. In terms of assembly, F-type ATPases have 2 components, CF(1) - the catalytic core - and CF(0) - the membrane proton channel. CF(1) has five subunits: alpha(3), beta(3), gamma(1), delta(1), epsilon(1). CF(0) has four main subunits: a(1), b(1), b'(1) and c(9-12).

The protein localises to the plastid. It localises to the chloroplast thylakoid membrane. It catalyses the reaction ATP + H2O + 4 H(+)(in) = ADP + phosphate + 5 H(+)(out). Functionally, produces ATP from ADP in the presence of a proton gradient across the membrane. The catalytic sites are hosted primarily by the beta subunits. The chain is ATP synthase subunit beta, chloroplastic from Nicotiana rustica (Aztec tobacco).